The chain runs to 758 residues: Translation initiation factor IF-2 (758 aa).

Residues 55–168 (EKNVGKQATQ…KTHQPSIPVK (114 aa)) are disordered. Composition is skewed to polar residues over residues 60-78 (KQATQNISQKSQSNGQQNH) and 86-95 (QRQQSATSKP). A compositionally biased stretch (low complexity) spans 96–136 (KVNNQQHSNSSNEKSKNTKGNQNRNMTQNNNNNNNNNNNNR). The tr-type G domain maps to 259 to 428 (ERPPVVTIMG…LLVAEVGELK (170 aa)). A G1 region spans residues 268–275 (GHVDHGKT). A GTP-binding site is contributed by 268–275 (GHVDHGKT). Residues 293-297 (GITQH) form a G2 region. The tract at residues 314-317 (DTPG) is G3. Residues 314-318 (DTPGH) and 368-371 (NKMD) contribute to the GTP site. Residues 368–371 (NKMD) are G4. Residues 404–406 (SAL) are G5.

Belongs to the TRAFAC class translation factor GTPase superfamily. Classic translation factor GTPase family. IF-2 subfamily.

It is found in the cytoplasm. One of the essential components for the initiation of protein synthesis. Protects formylmethionyl-tRNA from spontaneous hydrolysis and promotes its binding to the 30S ribosomal subunits. Also involved in the hydrolysis of GTP during the formation of the 70S ribosomal complex. The sequence is that of Translation initiation factor IF-2 from Lysinibacillus sphaericus (strain C3-41).